The primary structure comprises 549 residues: Tegument protein (549 aa).

3 disordered regions span residues 50–92 (KKKA…TASP), 353–391 (ETGD…CSSY), and 523–542 (TPIK…TRSP). 2 stretches are compositionally biased toward polar residues: residues 75–84 (PQALSVPSLS) and 356–369 (DCSS…QTHR). The span at 523 to 534 (TPIKTTSSSSPR) shows a compositional bias: low complexity.

Its function is as follows. This viral structural protein may have important functions, such as protein kinase activity, DNA binding, and possible transcriptional activation of immediate-early genes. The chain is Tegument protein from Homo sapiens (Human).